Reading from the N-terminus, the 251-residue chain is 3-deoxy-manno-octulosonate cytidylyltransferase (251 aa).

This sequence belongs to the KdsB family.

It localises to the cytoplasm. It carries out the reaction 3-deoxy-alpha-D-manno-oct-2-ulosonate + CTP = CMP-3-deoxy-beta-D-manno-octulosonate + diphosphate. It participates in nucleotide-sugar biosynthesis; CMP-3-deoxy-D-manno-octulosonate biosynthesis; CMP-3-deoxy-D-manno-octulosonate from 3-deoxy-D-manno-octulosonate and CTP: step 1/1. Its pathway is bacterial outer membrane biogenesis; lipopolysaccharide biosynthesis. Functionally, activates KDO (a required 8-carbon sugar) for incorporation into bacterial lipopolysaccharide in Gram-negative bacteria. In Chelativorans sp. (strain BNC1), this protein is 3-deoxy-manno-octulosonate cytidylyltransferase.